We begin with the raw amino-acid sequence, 1403 residues long: Centrosomal protein of 162 kDa (1403 aa).

The interval 18 to 42 is disordered; it reads KELSDDSFENSDKTARQSKKEMKKK. Phosphoserine occurs at positions 157 and 160. The tract at residues 170–231 is disordered; sequence QANAELTDDE…EKISVPKQEE (62 aa). Basic and acidic residues predominate over residues 208–231; the sequence is TKDEEMPSKENSKSEKISVPKQEE. Residues serine 474 and serine 475 each carry the phosphoserine modification. Positions 476 to 504 are disordered; the sequence is EEEGAVMGKQVPYKKARSAPPLLKRKPQS. Positions 487 to 502 are enriched in basic residues; sequence PYKKARSAPPLLKRKP. Coiled-coil stretches lie at residues 617–670, 698–1121, 1171–1206, and 1235–1386; these read KRVQ…QDNY, VTGE…MLSN, EVLQ…QFEN, and CQNA…LHRQ.

This sequence belongs to the CEP162 family. Interacts with CEP290. Interacts with CPNE4. Interacts with alpha-tubulin.

It localises to the cytoplasm. The protein localises to the cytoskeleton. The protein resides in the microtubule organizing center. It is found in the centrosome. Its subcellular location is the centriole. It localises to the spindle. The protein localises to the nucleus. Required to promote assembly of the transition zone in primary cilia. Acts by specifically recognizing and binding the axonemal microtubule. Localizes to the distal ends of centrioles before ciliogenesis and directly binds to axonemal microtubule, thereby promoting and restricting transition zone formation specifically at the cilia base. Required to mediate CEP290 association with microtubules. In Homo sapiens (Human), this protein is Centrosomal protein of 162 kDa (CEP162).